Here is a 299-residue protein sequence, read N- to C-terminus: AUGMIN subunit 1 (299 aa).

The residue at position 2 (Ser2) is an N-acetylserine. Coiled-coil stretches lie at residues 76–96 (RLKA…LESA) and 164–184 (RKAI…EDDV).

The protein belongs to the HAUS1 family. In terms of assembly, part of the augmin complex composed of 8 subunits. The complex acts on microtubules and interacts with gamma-tubulin in spindles and the phragmoplast. Interacts with AUG3.

The protein resides in the cytoplasm. It is found in the cytoskeleton. It localises to the spindle. Its subcellular location is the phragmoplast. Functionally, involved in microtubules reorganization during spindle and phragmoplast development. The protein is AUGMIN subunit 1 of Arabidopsis thaliana (Mouse-ear cress).